A 209-amino-acid polypeptide reads, in one-letter code: Ribosomal RNA small subunit methyltransferase G (209 aa).

Residues G71, F76, A122 to E123, and R135 each bind S-adenosyl-L-methionine.

This sequence belongs to the methyltransferase superfamily. RNA methyltransferase RsmG family.

It is found in the cytoplasm. Functionally, specifically methylates the N7 position of a guanine in 16S rRNA. The protein is Ribosomal RNA small subunit methyltransferase G of Flavobacterium johnsoniae (strain ATCC 17061 / DSM 2064 / JCM 8514 / BCRC 14874 / CCUG 350202 / NBRC 14942 / NCIMB 11054 / UW101) (Cytophaga johnsonae).